Here is a 126-residue protein sequence, read N- to C-terminus: uncharacterized protein (126 aa).

This is an uncharacterized protein from Methanocaldococcus jannaschii (strain ATCC 43067 / DSM 2661 / JAL-1 / JCM 10045 / NBRC 100440) (Methanococcus jannaschii).